The chain runs to 455 residues: Acid sphingomyelinase-like phosphodiesterase 3b (455 aa).

Positions 1–18 (MRLLAWLIFLANWGGARA) are cleaved as a signal peptide. 2 residues coordinate Zn(2+): Asp28 and His30. Residues Cys45 and Cys64 are joined by a disulfide bond. Asn72 is a glycosylation site (N-linked (GlcNAc...) asparagine). Positions 93 and 134 each coordinate Zn(2+). N-linked (GlcNAc...) asparagine glycosylation is present at Asn164. His236, His277, and His279 together coordinate Zn(2+). N-linked (GlcNAc...) asparagine glycosylation occurs at Asn343. 2 disulfide bridges follow: Cys405-Cys409 and Cys415-Cys428.

The protein belongs to the acid sphingomyelinase family. In terms of assembly, interacts with TLR4, TLR7, TLR8 and TLR9. Zn(2+) serves as cofactor. In terms of processing, N-glycosylated.

Its subcellular location is the secreted. It is found in the cell membrane. Lipid-modulating phosphodiesterase. Active on the surface of macrophages and dendritic cells and strongly influences macrophage lipid composition and membrane fluidity. Acts as a negative regulator of Toll-like receptor signaling. Has in vitro phosphodiesterase activity, but the physiological substrate is unknown. Lacks activity with phosphocholine-containing lipids, but can cleave CDP-choline, and can release phosphate from ATP and ADP (in vitro). The protein is Acid sphingomyelinase-like phosphodiesterase 3b (SMPDL3B) of Homo sapiens (Human).